A 668-amino-acid polypeptide reads, in one-letter code: DNA ligase (668 aa).

NAD(+) contacts are provided by residues 35 to 39 (DQEYD), 84 to 85 (SL), and Glu-115. Lys-117 acts as the N6-AMP-lysine intermediate in catalysis. NAD(+)-binding residues include Arg-138, Glu-172, Lys-288, and Lys-312. Zn(2+) contacts are provided by Cys-406, Cys-409, Cys-425, and Cys-430. The BRCT domain occupies 589-668 (KLEGPLKGLV…EEFFDKYGES (80 aa)).

The protein belongs to the NAD-dependent DNA ligase family. LigA subfamily. The cofactor is Mg(2+). Mn(2+) is required as a cofactor.

The enzyme catalyses NAD(+) + (deoxyribonucleotide)n-3'-hydroxyl + 5'-phospho-(deoxyribonucleotide)m = (deoxyribonucleotide)n+m + AMP + beta-nicotinamide D-nucleotide.. Its function is as follows. DNA ligase that catalyzes the formation of phosphodiester linkages between 5'-phosphoryl and 3'-hydroxyl groups in double-stranded DNA using NAD as a coenzyme and as the energy source for the reaction. It is essential for DNA replication and repair of damaged DNA. In Petrotoga mobilis (strain DSM 10674 / SJ95), this protein is DNA ligase.